The chain runs to 437 residues: UDP-sugar transporter protein SLC35A5 (437 aa).

The Cytoplasmic segment spans residues 1–21; that stretch reads MKVIFLRQLKTRGMERKCSRR. Residues 22–42 traverse the membrane as a helical segment; sequence PGLGPPTLYTFLLGIIFITLS. At 43–65 the chain is on the lumenal side; it reads SSRILLVKYSANEENKYDYLPTT. The helical transmembrane segment at 66 to 86 threads the bilayer; sequence VNVCSELMKLILCILVSLCVI. Topologically, residues 87 to 106 are cytoplasmic; that stretch reads KKEDHQSRHLRCTSWKEFSS. Residues 107 to 129 traverse the membrane as a helical segment; the sequence is FMKWSIPAFLYFLDNLIVFYVLS. Topologically, residues 130 to 132 are lumenal; sequence YLQ. The chain crosses the membrane as a helical span at residues 133–155; sequence PAMAVIFSNFSIITTALLFRIVL. At 156–158 the chain is on the cytoplasmic side; that stretch reads KRH. Residues 159–179 form a helical membrane-spanning segment; the sequence is LNWIQWASLLILFLSIVALTA. Residues 180–241 lie on the Lumenal side of the membrane; sequence STKTSQHELA…TTARVFSHIR (62 aa). N-linked (GlcNAc...) asparagine glycosylation is present at Asn-217. A helical membrane pass occupies residues 242 to 262; sequence LGLGHVLIIVQCFISSMANIY. Over 263–276 the chain is Cytoplasmic; sequence NEKILKEGTQLTES. The chain crosses the membrane as a helical span at residues 277 to 297; the sequence is IFIQNSKLYFFGIVFNGLTLV. Over 298–316 the chain is Lumenal; it reads LQSSNRDQIQNCGFFYGHN. Residues 317–337 form a helical membrane-spanning segment; the sequence is AFSVVLIFVTAFQGLSVAFIL. Over 338 to 343 the chain is Cytoplasmic; the sequence is KFLDNM. Residues 344–364 form a helical membrane-spanning segment; that stretch reads FHVLMAQVTTVIITTVSVLVF. Topologically, residues 365 to 367 are lumenal; it reads DFR. Residues 368–388 form a helical membrane-spanning segment; sequence PSLDFFLEAPSVLLSIFIYNA. Residues 389–437 lie on the Cytoplasmic side of the membrane; it reads SKPQNLECAPKQERIRHLSGSLWERSSGDGEELERLTKLKSDDSDDDTL. Phosphoserine occurs at positions 407, 429, and 432. The segment at 412 to 437 is disordered; that stretch reads ERSSGDGEELERLTKLKSDDSDDDTL. A compositionally biased stretch (basic and acidic residues) spans 421–430; that stretch reads LERLTKLKSD.

It belongs to the nucleotide-sugar transporter family. SLC35A subfamily. Probably forms homooligomers and heterooligomers with SLC35A1, SLC35A2, SLC35A3 and SLC35A4.

The protein resides in the golgi apparatus membrane. The catalysed reaction is UMP(out) + UDP-alpha-D-glucuronate(in) = UMP(in) + UDP-alpha-D-glucuronate(out). It carries out the reaction UMP(out) + UDP-N-acetyl-alpha-D-glucosamine(in) = UMP(in) + UDP-N-acetyl-alpha-D-glucosamine(out). It catalyses the reaction UDP-N-acetyl-alpha-D-galactosamine(in) + UMP(out) = UDP-N-acetyl-alpha-D-galactosamine(out) + UMP(in). Its function is as follows. Probable UDP-sugar:UMP transmembrane antiporter involved in UDP-alpha-D-glucuronate/UDP-GlcA, UDP-GlcNAc/UDP-N-acetyl-alpha-D-glucosamine and UDP-N-acetyl-alpha-D-galactosamine/UDP-GalNAc transport from the cytosol to the lumen of the Golgi. This is UDP-sugar transporter protein SLC35A5 from Mus musculus (Mouse).